The primary structure comprises 420 residues: Dynein axonemal assembly factor 4 (420 aa).

Residues 3–87 (LQVSDYSWQQ…KEAAMWETLS (85 aa)) enclose the CS domain. A mediates interaction with ESR1 and STUB1 region spans residues 7–103 (DYSWQQTKTA…EMMQRIREKS (97 aa)). TPR repeat units lie at residues 290 to 323 (PEWLKDKGNKLFATENYLAAINAYNLAIRLNNKM), 324 to 357 (PLLYLNRAACHLKLKNLHKAIEDSSKALELLMPP), and 366 to 399 (MKAHVRRGTAFCQLELYVEGLQDYEAALKIDPSN).

In terms of assembly, interacts with ZMYND10. Interacts with STUB1. Interacts with ESR1 and ESR2. Interacts with DNAAF2. Interacts with CCT3, CCT4, CCT5 and CCT8. Interacts with DNAAF6/PIH1D3.

It localises to the nucleus. The protein resides in the cytoplasm. The protein localises to the cell projection. It is found in the neuron projection. Its subcellular location is the dynein axonemal particle. In terms of biological role, involved in neuronal migration during development of the cerebral neocortex. May regulate the stability and proteasomal degradation of the estrogen receptors that play an important role in neuronal differentiation, survival and plasticity. Axonemal dynein assembly factor required for ciliary motility. The protein is Dynein axonemal assembly factor 4 of Pan paniscus (Pygmy chimpanzee).